The sequence spans 1018 residues: Isoleucine--tRNA ligase (1018 aa).

Positions 43–53 (PYTTGRIHLGT) match the 'HIGH' region motif. The 'KMSKS' region signature appears at 586 to 590 (KMSKS). ATP is bound at residue K589.

The protein belongs to the class-I aminoacyl-tRNA synthetase family. IleS type 2 subfamily. Monomer. Zn(2+) is required as a cofactor.

The protein resides in the cytoplasm. The enzyme catalyses tRNA(Ile) + L-isoleucine + ATP = L-isoleucyl-tRNA(Ile) + AMP + diphosphate. In terms of biological role, catalyzes the attachment of isoleucine to tRNA(Ile). As IleRS can inadvertently accommodate and process structurally similar amino acids such as valine, to avoid such errors it has two additional distinct tRNA(Ile)-dependent editing activities. One activity is designated as 'pretransfer' editing and involves the hydrolysis of activated Val-AMP. The other activity is designated 'posttransfer' editing and involves deacylation of mischarged Val-tRNA(Ile). The sequence is that of Isoleucine--tRNA ligase from Archaeoglobus fulgidus (strain ATCC 49558 / DSM 4304 / JCM 9628 / NBRC 100126 / VC-16).